We begin with the raw amino-acid sequence, 272 residues long: 3',5'-cyclic adenosine monophosphate phosphodiesterase CpdA (272 aa).

Residues Asp21, His23, Asp63, Asn93, His161, His200, and His202 each coordinate Fe cation. AMP-binding positions include His23, Asp63, and 93 to 94 (NH). An AMP-binding site is contributed by His202.

Belongs to the cyclic nucleotide phosphodiesterase class-III family. Monomer. A divalent metal cation is required as a cofactor.

It catalyses the reaction 3',5'-cyclic AMP + H2O = AMP + H(+). Activated by iron. Other divalent metal ions have no effect. Functionally, hydrolyzes cAMP to 5'-AMP. Plays an important regulatory role in modulating the intracellular concentration of cAMP, thereby influencing cAMP-dependent processes. Specifically required for regulation of virulence factors. Can also hydrolyze cGMP, but cGMP is unlikely to be synthesized by P.aeruginosa and cAMP is probably the biologically relevant substrate for CpdA in vivo. The chain is 3',5'-cyclic adenosine monophosphate phosphodiesterase CpdA from Pseudomonas aeruginosa.